A 103-amino-acid polypeptide reads, in one-letter code: Large ribosomal subunit protein uL24 (103 aa).

This sequence belongs to the universal ribosomal protein uL24 family. In terms of assembly, part of the 50S ribosomal subunit.

In terms of biological role, one of two assembly initiator proteins, it binds directly to the 5'-end of the 23S rRNA, where it nucleates assembly of the 50S subunit. Its function is as follows. One of the proteins that surrounds the polypeptide exit tunnel on the outside of the subunit. This Bacillus licheniformis (strain ATCC 14580 / DSM 13 / JCM 2505 / CCUG 7422 / NBRC 12200 / NCIMB 9375 / NCTC 10341 / NRRL NRS-1264 / Gibson 46) protein is Large ribosomal subunit protein uL24.